The following is a 235-amino-acid chain: UPF0758 protein Swol_1642 (235 aa).

Positions 109-235 (IIKSPEDVQE…YCSLKARGLI (127 aa)) constitute an MPN domain. Zn(2+)-binding residues include H184, H186, and D197. The JAMM motif signature appears at 184–197 (HNHPSGDPTPSQED).

Belongs to the UPF0758 family.

The polypeptide is UPF0758 protein Swol_1642 (Syntrophomonas wolfei subsp. wolfei (strain DSM 2245B / Goettingen)).